A 185-amino-acid polypeptide reads, in one-letter code: Pro-adrenomedullin (185 aa).

The first 21 residues, 1–21, serve as a signal peptide directing secretion; it reads MKLVSVALMYLGSLAFLGADT. Arg41 carries the arginine amide modification. Residues 45-92 constitute a propeptide that is removed on maturation; it reads ELRMSSSYPTGLADVKAGPAQTLIRPQDMKGASRSPEDSSPDAARIRV. The tract at residues 60–87 is disordered; sequence KAGPAQTLIRPQDMKGASRSPEDSSPDA. An intrachain disulfide couples Cys110 to Cys115. The segment at 133 to 185 is disordered; the sequence is DNVAPRSKISPQGYGRRRRRSLPEAGPGRTLVSSKPQAHGAPAPPSGSAPHFL. At Tyr146 the chain carries Tyrosine amide. Positions 148–185 are cleaved as a propeptide — preproAM C-terminal fragment; sequence RRRRRSLPEAGPGRTLVSSKPQAHGAPAPPSGSAPHFL.

Belongs to the adrenomedullin family. In terms of tissue distribution, highest levels found in pheochromocytoma and adrenal medulla. Also found in lung, ventricle and kidney tissues.

It is found in the secreted. Its function is as follows. Adrenomedullin/ADM and proadrenomedullin N-20 terminal peptide/PAMP are peptide hormones that act as potent hypotensive and vasodilatator agents. Numerous actions have been reported most related to the physiologic control of fluid and electrolyte homeostasis. In the kidney, ADM is diuretic and natriuretic, and both ADM and PAMP inhibit aldosterone secretion by direct adrenal actions. In pituitary gland, both peptides at physiologically relevant doses inhibit basal ACTH secretion. Both peptides appear to act in brain and pituitary gland to facilitate the loss of plasma volume, actions which complement their hypotensive effects in blood vessels. Functionally, ADM function is mediated by the CALCRL-RAMP2 and CALCRL-RAMP3 receptor complexes with ADM showing the highest potency for the CALCRL-RAMP2 complex. The protein is Pro-adrenomedullin of Homo sapiens (Human).